A 310-amino-acid polypeptide reads, in one-letter code: Coproporphyrin III ferrochelatase (310 aa).

Residues Tyr13, Arg30, 46-47 (RY), Ser54, and Tyr125 each bind Fe-coproporphyrin III. The Fe(2+) site is built by His183 and Glu264.

This sequence belongs to the ferrochelatase family.

It localises to the cytoplasm. The enzyme catalyses Fe-coproporphyrin III + 2 H(+) = coproporphyrin III + Fe(2+). Its pathway is porphyrin-containing compound metabolism; protoheme biosynthesis. Involved in coproporphyrin-dependent heme b biosynthesis. Catalyzes the insertion of ferrous iron into coproporphyrin III to form Fe-coproporphyrin III. This Geobacillus sp. (strain WCH70) protein is Coproporphyrin III ferrochelatase.